The following is a 125-amino-acid chain: Hydrogenase maturation factor HypA (125 aa).

Residue His2 participates in Ni(2+) binding. Residues Cys73, Cys76, Cys96, and Cys99 each coordinate Zn(2+).

This sequence belongs to the HypA/HybF family.

Functionally, involved in the maturation of [NiFe] hydrogenases. Required for nickel insertion into the metal center of the hydrogenase. This chain is Hydrogenase maturation factor HypA, found in Methanobrevibacter smithii (strain ATCC 35061 / DSM 861 / OCM 144 / PS).